Consider the following 124-residue polypeptide: Large ribosomal subunit protein bL12 (124 aa).

A disordered region spans residues 99–124; that stretch reads KEGMNKEDAEKAKADLEAAGAKVELK. Residues 101–114 are compositionally biased toward basic and acidic residues; that stretch reads GMNKEDAEKAKADL. The span at 115–124 shows a compositional bias: low complexity; the sequence is EAAGAKVELK.

It belongs to the bacterial ribosomal protein bL12 family. In terms of assembly, homodimer. Part of the ribosomal stalk of the 50S ribosomal subunit. Forms a multimeric L10(L12)X complex, where L10 forms an elongated spine to which 2 to 4 L12 dimers bind in a sequential fashion. Binds GTP-bound translation factors.

In terms of biological role, forms part of the ribosomal stalk which helps the ribosome interact with GTP-bound translation factors. Is thus essential for accurate translation. The sequence is that of Large ribosomal subunit protein bL12 from Campylobacter hominis (strain ATCC BAA-381 / DSM 21671 / CCUG 45161 / LMG 19568 / NCTC 13146 / CH001A).